The primary structure comprises 148 residues: Arginine repressor (148 aa).

The protein belongs to the ArgR family.

It is found in the cytoplasm. The protein operates within amino-acid biosynthesis; L-arginine biosynthesis [regulation]. In terms of biological role, regulates arginine biosynthesis genes. This Chloroherpeton thalassium (strain ATCC 35110 / GB-78) protein is Arginine repressor.